The primary structure comprises 401 residues: ATP phosphoribosyltransferase regulatory subunit (401 aa).

This sequence belongs to the class-II aminoacyl-tRNA synthetase family. HisZ subfamily. In terms of assembly, heteromultimer composed of HisG and HisZ subunits.

It localises to the cytoplasm. Its pathway is amino-acid biosynthesis; L-histidine biosynthesis; L-histidine from 5-phospho-alpha-D-ribose 1-diphosphate: step 1/9. Functionally, required for the first step of histidine biosynthesis. May allow the feedback regulation of ATP phosphoribosyltransferase activity by histidine. The chain is ATP phosphoribosyltransferase regulatory subunit from Desulforamulus reducens (strain ATCC BAA-1160 / DSM 100696 / MI-1) (Desulfotomaculum reducens).